A 171-amino-acid chain; its full sequence is UPF0398 protein MGAS10270_Spy1470 (171 aa).

It belongs to the UPF0398 family.

This is UPF0398 protein MGAS10270_Spy1470 from Streptococcus pyogenes serotype M2 (strain MGAS10270).